A 321-amino-acid polypeptide reads, in one-letter code: uncharacterized protein (321 aa).

Positions 1 to 80 are disordered; the sequence is MQGGQEVGRE…GELSGGWGEF (80 aa).

This is an uncharacterized protein from Mus musculus (Mouse).